A 357-amino-acid chain; its full sequence is Alternative oxidase, mitochondrial (357 aa).

A helical membrane pass occupies residues 152–172 (LTRCIFLESIAGVPGAVASFI). Fe cation is bound by residues E159, E198, and H201. Residues 218 to 238 (IIYVGQGVFCNLFFLFYLANP) traverse the membrane as a helical segment. E249, E304, and H307 together coordinate Fe cation. The disordered stretch occupies residues 330 to 357 (IPDLKEPQPESGLKVTKPHGWEKEELKL). Residues 348-357 (HGWEKEELKL) show a composition bias toward basic and acidic residues.

This sequence belongs to the alternative oxidase family. Fe cation serves as cofactor.

It localises to the mitochondrion inner membrane. Functionally, catalyzes cyanide-resistant oxygen consumption. May increase respiration when the cytochrome respiratory pathway is restricted, or in response to low temperatures. This is Alternative oxidase, mitochondrial (STO1) from Scheffersomyces stipitis (strain ATCC 58785 / CBS 6054 / NBRC 10063 / NRRL Y-11545) (Yeast).